Here is a 302-residue protein sequence, read N- to C-terminus: MDEYAKIEKIGEGTYGVVYKGVHKATGQIVAMKKIRLENEEEGVPSTAIREISLLKELQHPNIVCLLDVLMQDSRLYLIFEFLSMDLKKYLDSIPSGQYLEAMLVKSYLYQILQGIIFCHARRVLHRDLKPQNLLIDSKGVIKLADFGLARAFGIPVRVYTHEVVTLWYRAPEVLLGSVRYSTPVDVWSIGTIFAEIASKKPLFHGDSEIDQLFRISELWGTPNNEVWPEVESLQDYKNTFPKWKGGSLAANVKNIDKEGLDLLAKMLVYDPAKRISARKALLHPYFDDLDKSSLPANQIRN.

One can recognise a Protein kinase domain in the interval 4–287 (YAKIEKIGEG…ARKALLHPYF (284 aa)). ATP contacts are provided by residues 10–18 (IGEGTYGVV) and K33. Phosphothreonine is present on T14. Y15 carries the post-translational modification Phosphotyrosine; by wee1 and wee2. D128 functions as the Proton acceptor in the catalytic mechanism. A Phosphothreonine; by cak modification is found at T161.

The protein belongs to the protein kinase superfamily. CMGC Ser/Thr protein kinase family. CDC2/CDKX subfamily. As to quaternary structure, forms a stable but non-covalent complex with a regulatory subunit and with a cyclin. Phosphorylation at Tyr-15 by wee1 and wee2 inhibits the protein kinase activity and acts negative regulator of entry into mitosis (G2 to M transition).

The protein localises to the nucleus. It is found in the cytoplasm. Its subcellular location is the cytoskeleton. The protein resides in the microtubule organizing center. It localises to the centrosome. The catalysed reaction is L-seryl-[protein] + ATP = O-phospho-L-seryl-[protein] + ADP + H(+). It carries out the reaction L-threonyl-[protein] + ATP = O-phospho-L-threonyl-[protein] + ADP + H(+). The enzyme catalyses [DNA-directed RNA polymerase] + ATP = phospho-[DNA-directed RNA polymerase] + ADP + H(+). Its activity is regulated as follows. Phosphorylation at Thr-14 or Tyr-15 inactivates the enzyme, while phosphorylation at Thr-161 activates it. Functionally, plays a key role in the control of the eukaryotic cell cycle by modulating the centrosome cycle as well as mitotic onset; promotes G2-M transition via association with multiple interphase cyclins. During G2 and early mitosis, CDC25A/B/C-mediated dephosphorylation activates CDK1/cyclin complexes which phosphorylate several substrates that trigger at least centrosome separation, Golgi dynamics, nuclear envelope breakdown and chromosome condensation. Once chromosomes are condensed and aligned at the metaphase plate, CDK1 activity is switched off by WEE1- and PKMYT1-mediated phosphorylation to allow sister chromatid separation, chromosome decondensation, reformation of the nuclear envelope and cytokinesis. Catalyzes lamin (LMNA, LMNB1 and LMNB2) phosphorylation at the onset of mitosis, promoting nuclear envelope breakdown. This is Cyclin-dependent kinase 1 (CDK1) from Rana dybowskii (Dybovsky's frog).